The chain runs to 372 residues: uncharacterized protein (372 aa).

The N-terminal stretch at 1–33 (MVRRALRLAAGTASLAAGTWLLRALHGTPAALG) is a signal peptide.

It to K.pneumoniae RomA.

This is an uncharacterized protein from Mycobacterium bovis (strain ATCC BAA-935 / AF2122/97).